The primary structure comprises 228 residues: Ribonuclease S-1 (228 aa).

Positions 1 to 27 are cleaved as a signal peptide; sequence MGVTGMTYMFTMVFSLIVLILSSSTVG. Q36 serves as a coordination point for RNA. A disulfide bond links C42 and C49. Residue H60 coordinates RNA. H60 serves as the catalytic Proton donor. A disulfide bridge links C75 with C119. An N-linked (GlcNAc...) asparagine glycan is attached at N87. 98 to 99 is an RNA binding site; the sequence is NV. The N-linked (GlcNAc...) asparagine glycan is linked to N101. Residues F108, 111-112, and 115-116 each bind RNA; these read KE and KH. The active site involves E112. Residue H116 is the Proton acceptor of the active site. 3 N-linked (GlcNAc...) asparagine glycosylation sites follow: N144, N157, and N175. Intrachain disulfides connect C183/C222 and C199/C210.

This sequence belongs to the RNase T2 family. Post-translationally, N-linked core structure at Asn-87 and Asn-101 contains xylose and fucose or consists of disaccharide (GlcNAc-GlcNAc). N-linked core structure at Asn-144 contains xylose.

The catalysed reaction is a ribonucleotidyl-ribonucleotide-RNA + H2O = a 3'-end 3'-phospho-ribonucleotide-RNA + a 5'-end dephospho-ribonucleoside-RNA + H(+). Its function is as follows. Self-incompatibility (SI) is the inherited ability of a flowering plant to prevent self-fertilization by discriminating between self and non-self pollen during pollination. In many species, self-incompatibility is controlled by the single, multiallelic locus S. The chain is Ribonuclease S-1 from Pyrus pyrifolia (Chinese pear).